The following is a 430-amino-acid chain: Tektin-2 (430 aa).

2 coiled-coil regions span residues 82–160 and 273–379; these read LTDL…QAFE and EKVY…DIAC.

The protein belongs to the tektin family. Microtubule inner protein component of sperm flagellar doublet microtubules. May interact with CCDC172. Post-translationally, tyrosine phosphorylated. In terms of processing, ubiquitinated, leading to its degradation. Deubiquitinated by USP16, promoting its stability.

It localises to the cytoplasm. The protein resides in the cytoskeleton. It is found in the cilium axoneme. The protein localises to the flagellum axoneme. Its subcellular location is the microtubule organizing center. Microtubule inner protein (MIP) part of the dynein-decorated doublet microtubules (DMTs) in cilia and flagellar axoneme. Plays a key role in the assembly or attachment of the inner dynein arm to microtubules in sperm flagella and tracheal cilia. Forms filamentous polymers in the walls of ciliary and flagellar microtubules. In Macaca fascicularis (Crab-eating macaque), this protein is Tektin-2 (TEKT2).